Here is a 399-residue protein sequence, read N- to C-terminus: uncharacterized protein (399 aa).

A run of 5 helical transmembrane segments spans residues L26 to G46, V266 to I286, I301 to E321, F324 to I344, and A358 to I378.

It belongs to the ABC-4 integral membrane protein family.

It is found in the cell membrane. This is an uncharacterized protein from Methanocaldococcus jannaschii (strain ATCC 43067 / DSM 2661 / JAL-1 / JCM 10045 / NBRC 100440) (Methanococcus jannaschii).